We begin with the raw amino-acid sequence, 131 residues long: D-ribose pyranase (131 aa).

H20 functions as the Proton donor in the catalytic mechanism. Residues D28, H98, and 120–122 contribute to the substrate site; that span reads YSN.

Belongs to the RbsD / FucU family. RbsD subfamily. In terms of assembly, homodecamer.

The protein localises to the cytoplasm. The enzyme catalyses beta-D-ribopyranose = beta-D-ribofuranose. The protein operates within carbohydrate metabolism; D-ribose degradation; D-ribose 5-phosphate from beta-D-ribopyranose: step 1/2. Its function is as follows. Catalyzes the interconversion of beta-pyran and beta-furan forms of D-ribose. In Limosilactobacillus fermentum (strain NBRC 3956 / LMG 18251) (Lactobacillus fermentum), this protein is D-ribose pyranase.